Reading from the N-terminus, the 141-residue chain is Hemoglobin subunit zeta (141 aa).

Residue S1 is modified to N-acetylserine. One can recognise a Globin domain in the interval 1 to 141 (SLTKAERTII…VSGVLTEKYR (141 aa)). T28 is subject to Phosphothreonine. A Phosphoserine modification is found at S52. H58 provides a ligand contact to heme b. Position 72 is a phosphoserine (S72). H87 serves as a coordination point for heme b.

The protein belongs to the globin family. In terms of assembly, heterotetramer of two zeta chains and two epsilon chains.

Its function is as follows. The zeta chain is an alpha-type chain of mammalian embryonic hemoglobin. This is Hemoglobin subunit zeta from Sus scrofa (Pig).